An 81-amino-acid chain; its full sequence is CLAVATA3/ESR (CLE)-related protein 6 (81 aa).

A signal peptide spans 1–26; it reads MANLILKQSLIILLIIYSTPILSSQA. Hydroxyproline occurs at positions 73 and 76. The O-linked (Ara...) hydroxyproline glycan is linked to Pro76.

It belongs to the CLV3/ESR signal peptide family. The O-glycosylation (arabinosylation) of the hydroxyproline Pro-76 enhances binding affinity of the CLE6p peptide for its receptor. Mostly expressed in roots, seedlings, stems and flowers, and, to a lower extent, in apex and siliques.

It localises to the secreted. Its subcellular location is the extracellular space. Functionally, extracellular signal peptide that regulates cell fate. The protein is CLAVATA3/ESR (CLE)-related protein 6 of Arabidopsis thaliana (Mouse-ear cress).